We begin with the raw amino-acid sequence, 49 residues long: Large ribosomal subunit protein bL33B (49 aa).

The protein belongs to the bacterial ribosomal protein bL33 family.

The protein is Large ribosomal subunit protein bL33B of Geobacillus kaustophilus (strain HTA426).